A 130-amino-acid polypeptide reads, in one-letter code: Transcription antitermination protein NusB (130 aa).

This sequence belongs to the NusB family.

Involved in transcription antitermination. Required for transcription of ribosomal RNA (rRNA) genes. Binds specifically to the boxA antiterminator sequence of the ribosomal RNA (rrn) operons. The protein is Transcription antitermination protein NusB of Macrococcus caseolyticus (strain JCSC5402) (Macrococcoides caseolyticum).